A 300-amino-acid chain; its full sequence is ADP-ribosyl cyclase/cyclic ADP-ribose hydrolase 1 (300 aa).

Residues 1–21 are Cytoplasmic-facing; sequence MANCEFSPVSGDKPCCRLSRR. Residues 22-42 traverse the membrane as a helical; Signal-anchor for type II membrane protein segment; that stretch reads AQLCLGVSILVLILVVVLAVV. The Extracellular segment spans residues 43 to 300; that stretch reads VPRWRQQWSG…PEDSSCTSEI (258 aa). 3 cysteine pairs are disulfide-bonded: Cys-67–Cys-82, Cys-99–Cys-180, and Cys-160–Cys-173. N-linked (GlcNAc...) asparagine glycosylation occurs at Asn-100. Residue Cys-119 is part of the active site. An N-linked (GlcNAc...) asparagine glycan is attached at Asn-164. Cys-201 is a catalytic residue. N-linked (GlcNAc...) asparagine glycans are attached at residues Asn-209 and Asn-219. 2 disulfide bridges follow: Cys-254–Cys-275 and Cys-287–Cys-296.

It belongs to the ADP-ribosyl cyclase family. Homodimer. Expressed at high levels in pancreas, liver, kidney, brain, testis, ovary, placenta, malignant lymphoma and neuroblastoma.

The protein resides in the cell surface. It is found in the membrane. It catalyses the reaction 2'-phospho-cyclic ADP-ribose + nicotinate = nicotinate-adenine dinucleotide phosphate. It carries out the reaction NAD(+) = cyclic ADP-beta-D-ribose + nicotinamide + H(+). The enzyme catalyses NAD(+) + H2O = ADP-D-ribose + nicotinamide + H(+). The catalysed reaction is cyclic ADP-beta-D-ribose + H2O = ADP-D-ribose. It catalyses the reaction NADP(+) = 2'-phospho-cyclic ADP-ribose + nicotinamide. It carries out the reaction nicotinate + NADP(+) = nicotinate-adenine dinucleotide phosphate + nicotinamide. Its activity is regulated as follows. ATP inhibits the cADPR hydrolyzing activity. Synthesizes cyclic ADP-ribose (cADPR), a second messenger for glucose-induced insulin secretion. Synthesizes the Ca(2+) mobilizer nicotinate-adenine dinucleotide phosphate, NAADP(+), from 2'-phospho-cADPR and nicotinic acid, as well as from NADP(+) and nicotinic acid. At both pH 5.0 and pH 7.4 preferentially transforms 2'-phospho-cADPR into NAADP(+), while preferentially cleaving NADP(+) to cADPR and ADPRP rather than into NADDP(+). Has cADPR hydrolase activity. This Homo sapiens (Human) protein is ADP-ribosyl cyclase/cyclic ADP-ribose hydrolase 1 (CD38).